Here is a 37-residue protein sequence, read N- to C-terminus: Large ribosomal subunit protein bL36c (37 aa).

This sequence belongs to the bacterial ribosomal protein bL36 family.

The protein localises to the plastid. Its subcellular location is the chloroplast. The protein is Large ribosomal subunit protein bL36c of Thalassiosira pseudonana (Marine diatom).